Consider the following 806-residue polypeptide: Lysine-specific demethylase JMJ15 (806 aa).

The segment at 1–43 (MEPFSAAQNKEDKDTSVEPPRRRCHRKNKGTNVEPPSSPYHPK) is disordered. Basic and acidic residues predominate over residues 9–21 (NKEDKDTSVEPPR). The JmjN domain occupies 61–102 (APVFHPTSEEFEDTLAYIEKIRPLAESFGICRIVPPSNWSPP). Positions 128 to 176 (NRGPVKKKTPKGRKRKRGKYSRTVAPKKRNGSVSKSVSTPKATEEENFG) are disordered. Basic residues predominate over residues 131–157 (PVKKKTPKGRKRKRGKYSRTVAPKKRN). The Nuclear localization signal motif lies at 132 to 139 (VKKKTPKG). Residues 158-168 (GSVSKSVSTPK) are compositionally biased toward polar residues. Residues 261–427 (KYISSGWNLN…HGQNAVEIYS (167 aa)) form the JmjC domain. Fe cation contacts are provided by histidine 307, glutamate 309, and histidine 395. Cysteine 514, cysteine 517, cysteine 528, cysteine 531, cysteine 539, histidine 542, cysteine 545, and cysteine 547 together coordinate Zn(2+). The C5HC2 zinc-finger motif lies at 514–566 (CISCFSDLHLSATGCKNCSSLEEYGCTKHDICSCEGKDRFIFLRYTIDELSSL). The FYR N-terminal domain occupies 629 to 687 (IMDLAAYHVEPINLGFLVVGKLWCNKHAIFPKGFKSRVKFYNVQDPMRISYYVSEIVDA). An FYR C-terminal domain is found at 689–775 (LLGPLFKVTL…HGQVEYWNHK (87 aa)).

It belongs to the JARID1 histone demethylase family. Fe(2+) is required as a cofactor. In terms of tissue distribution, expressed in roots, cotyledons, shoot apex, rosette and cauline leaves, stems, inflorescences and siliques. Expressed at low levels during vegetative growth but to higher levels in young floral organs.

It localises to the nucleus. The enzyme catalyses N(6),N(6),N(6)-trimethyl-L-lysyl(4)-[histone H3] + 2-oxoglutarate + O2 = N(6),N(6)-dimethyl-L-lysyl(4)-[histone H3] + formaldehyde + succinate + CO2. Histone demethylase that demethylates 'Lys-4' (H3K4me) of histone H3 with a specific activity for H3K4me3. No activity on H3K4me2, H3K4me1, H3K9me3/2, H3K27me3/2 and H3K36me3/2. Involved in the control of flowering time by demethylating H3K4me3 at the FLC locus and repressing its expression. The repression of FLC level and reduction in H3K4me3 at the FLC locus results in induction of the flowering activator FT, which is a downstream target of FLC. Promotes salt tolerance by down-regulating the expression of several transcriptions factors involved in stress responses via H3K4me3 and H3K4me2 demethylation. This chain is Lysine-specific demethylase JMJ15, found in Arabidopsis thaliana (Mouse-ear cress).